Reading from the N-terminus, the 607-residue chain is Dolichyl-diphosphooligosaccharide--protein glycosyltransferase subunit 1 (607 aa).

A signal peptide spans methionine 1 to alanine 24. The Lumenal segment spans residues serine 25–leucine 434. Position 187 is an N6-acetyllysine (lysine 187). N-linked (GlcNAc...) asparagine glycosylation occurs at asparagine 299. The chain crosses the membrane as a helical span at residues methionine 435–isoleucine 455. At tyrosine 456 to leucine 607 the chain is on the cytoplasmic side. Lysine 538 carries the post-translational modification N6-acetyllysine; alternate. A Glycyl lysine isopeptide (Lys-Gly) (interchain with G-Cter in SUMO2); alternate cross-link involves residue lysine 538.

It belongs to the OST1 family. In terms of assembly, component of the oligosaccharyltransferase (OST) complex. OST exists in two different complex forms which contain common core subunits RPN1, RPN2, OST48, OST4, DAD1 and TMEM258, either STT3A or STT3B as catalytic subunits, and form-specific accessory subunits. STT3A complex assembly occurs through the formation of 3 subcomplexes. Subcomplex 1 contains RPN1 and TMEM258, subcomplex 2 contains the STT3A-specific subunits STT3A, DC2/OSTC, and KCP2 as well as the core subunit OST4, and subcomplex 3 contains RPN2, DAD1, and OST48. The STT3A complex can form stable complexes with the Sec61 complex or with both the Sec61 and TRAP complexes. Interacts with TMEM35A/NACHO. Ubiquitinated by the ECS(ASB11) complex. Post-translationally, ufmylated by UFL1 in response to endoplasmic reticulum stress, promoting reticulophagy of endoplasmic reticulum sheets.

It is found in the endoplasmic reticulum membrane. The protein operates within protein modification; protein glycosylation. Subunit of the oligosaccharyl transferase (OST) complex that catalyzes the initial transfer of a defined glycan (Glc(3)Man(9)GlcNAc(2) in eukaryotes) from the lipid carrier dolichol-pyrophosphate to an asparagine residue within an Asn-X-Ser/Thr consensus motif in nascent polypeptide chains, the first step in protein N-glycosylation. N-glycosylation occurs cotranslationally and the complex associates with the Sec61 complex at the channel-forming translocon complex that mediates protein translocation across the endoplasmic reticulum (ER). All subunits are required for a maximal enzyme activity. This Canis lupus familiaris (Dog) protein is Dolichyl-diphosphooligosaccharide--protein glycosyltransferase subunit 1.